A 367-amino-acid chain; its full sequence is Probable butyrate kinase (367 aa).

It belongs to the acetokinase family.

Its subcellular location is the cytoplasm. The catalysed reaction is butanoate + ATP = butanoyl phosphate + ADP. This Bacillus cereus (strain G9842) protein is Probable butyrate kinase.